The following is a 479-amino-acid chain: Aspartyl/glutamyl-tRNA(Asn/Gln) amidotransferase subunit B (479 aa).

Belongs to the GatB/GatE family. GatB subfamily. Heterotrimer of A, B and C subunits.

It catalyses the reaction L-glutamyl-tRNA(Gln) + L-glutamine + ATP + H2O = L-glutaminyl-tRNA(Gln) + L-glutamate + ADP + phosphate + H(+). The catalysed reaction is L-aspartyl-tRNA(Asn) + L-glutamine + ATP + H2O = L-asparaginyl-tRNA(Asn) + L-glutamate + ADP + phosphate + 2 H(+). Its function is as follows. Allows the formation of correctly charged Asn-tRNA(Asn) or Gln-tRNA(Gln) through the transamidation of misacylated Asp-tRNA(Asn) or Glu-tRNA(Gln) in organisms which lack either or both of asparaginyl-tRNA or glutaminyl-tRNA synthetases. The reaction takes place in the presence of glutamine and ATP through an activated phospho-Asp-tRNA(Asn) or phospho-Glu-tRNA(Gln). This chain is Aspartyl/glutamyl-tRNA(Asn/Gln) amidotransferase subunit B, found in Geobacter sp. (strain M21).